Consider the following 197-residue polypeptide: uncharacterized protein (197 aa).

This is an uncharacterized protein from Methanocaldococcus jannaschii (strain ATCC 43067 / DSM 2661 / JAL-1 / JCM 10045 / NBRC 100440) (Methanococcus jannaschii).